The primary structure comprises 191 residues: MAVKLIVGLGNPGPKYQWTRHNAGFMVLDRLSHLTGITVTRKNFSGLCGEGSWQGDRLILLKPQTFMNLSGRSVAEALRFHKLTVEDLIVIHDDLDIPFGRVKLKAGGGHAGHNGLRSLSQELGSGAFLRVRMGIGRPLHGDVVNYVLSNFSPEEMIGLPRLLDGIVDLLEMLITEGLPKTMSLYNNKELL.

Tyrosine 16 contacts tRNA. Histidine 21 functions as the Proton acceptor in the catalytic mechanism. Residues phenylalanine 66, asparagine 68, and asparagine 114 each coordinate tRNA.

It belongs to the PTH family. Monomer.

It is found in the cytoplasm. It carries out the reaction an N-acyl-L-alpha-aminoacyl-tRNA + H2O = an N-acyl-L-amino acid + a tRNA + H(+). Functionally, hydrolyzes ribosome-free peptidyl-tRNAs (with 1 or more amino acids incorporated), which drop off the ribosome during protein synthesis, or as a result of ribosome stalling. Its function is as follows. Catalyzes the release of premature peptidyl moieties from peptidyl-tRNA molecules trapped in stalled 50S ribosomal subunits, and thus maintains levels of free tRNAs and 50S ribosomes. The sequence is that of Peptidyl-tRNA hydrolase from Geotalea uraniireducens (strain Rf4) (Geobacter uraniireducens).